Reading from the N-terminus, the 400-residue chain is Probable glycosyltransferase WbjE (400 aa).

It belongs to the glycosyltransferase group 1 family. Glycosyltransferase 4 subfamily.

It participates in bacterial outer membrane biogenesis; LPS O-antigen biosynthesis. The sequence is that of Probable glycosyltransferase WbjE (wbjE) from Pseudomonas aeruginosa.